The following is a 517-amino-acid chain: Ribonuclease Y (517 aa).

A helical transmembrane segment spans residues 3–23 (AILYVIVAVIALILGGAAGVA). A KH domain is found at 207 to 292 (TVTVVSLPND…EMVEKAQKEV (86 aa)). Residues 333–426 (VLKHSIEVAH…VAAADAISAA (94 aa)) form the HD domain.

The protein belongs to the RNase Y family.

Its subcellular location is the cell membrane. Endoribonuclease that initiates mRNA decay. This is Ribonuclease Y from Symbiobacterium thermophilum (strain DSM 24528 / JCM 14929 / IAM 14863 / T).